Consider the following 319-residue polypeptide: Vomeronasal type-1 receptor 96 (319 aa).

At 1-19 (MNKVNILPSDTNIKITLFS) the chain is on the extracellular side. The helical transmembrane segment at 20–40 (EVSVGISANSVLFFAHLCMFF) threads the bilayer. At 41–49 (EENRSKPID) the chain is on the cytoplasmic side. The helical transmembrane segment at 50-70 (LCIAFLSLTQLMLLVTMGLIA) threads the bilayer. The Extracellular segment spans residues 71-93 (ADMFMSQGIWDSTTCRSIIYFHR). Cys85 and Cys172 are oxidised to a cystine. Residues 94–114 (LLRGFNLCAACLLHILWTFTL) form a helical membrane-spanning segment. Topologically, residues 115–134 (SPRSSCLTKFKHKSPHHISC) are cytoplasmic. The helical transmembrane segment at 135–155 (AFFSLCVLYMLFSSHLFVLII) threads the bilayer. Residues 156-193 (ATSNLTSDHFMYVTQSCSILPMSYSRTTMFSLVMVTRE) are Extracellular-facing. N-linked (GlcNAc...) asparagine glycosylation is present at Asn159. Residues 194 to 214 (AFLISLMALFSGYMVTLLWRH) form a helical membrane-spanning segment. The Cytoplasmic segment spans residues 215–238 (KKQVQHLHSTSLSSKSSPQQRATR). The chain crosses the membrane as a helical span at residues 239-259 (TILLLMSFFVVLYILDIVIFQ). The Extracellular portion of the chain corresponds to 260–269 (SRTKFKDGSM). Residues 270 to 290 (FYSLHIIVSHSYATISPFVFI) form a helical membrane-spanning segment. Residues 291 to 319 (FSDKRIIKFLGSMSGRIINICLFSDGYGP) lie on the Cytoplasmic side of the membrane.

The protein belongs to the G-protein coupled receptor 1 family.

The protein resides in the cell membrane. In terms of biological role, putative pheromone receptor implicated in the regulation of social as well as reproductive behavior. The protein is Vomeronasal type-1 receptor 96 (Vom1r96) of Rattus norvegicus (Rat).